Reading from the N-terminus, the 298-residue chain is Acetylglutamate kinase (298 aa).

Residues 64 to 65 (GG), Arg-86, and Asn-195 each bind substrate.

This sequence belongs to the acetylglutamate kinase family. ArgB subfamily.

It localises to the cytoplasm. The catalysed reaction is N-acetyl-L-glutamate + ATP = N-acetyl-L-glutamyl 5-phosphate + ADP. It participates in amino-acid biosynthesis; L-arginine biosynthesis; N(2)-acetyl-L-ornithine from L-glutamate: step 2/4. Catalyzes the ATP-dependent phosphorylation of N-acetyl-L-glutamate. The sequence is that of Acetylglutamate kinase from Aquifex aeolicus (strain VF5).